The sequence spans 354 residues: Protein RecA (354 aa).

An ATP-binding site is contributed by 65–72 (GPESSGKT).

This sequence belongs to the RecA family.

The protein localises to the cytoplasm. Can catalyze the hydrolysis of ATP in the presence of single-stranded DNA, the ATP-dependent uptake of single-stranded DNA by duplex DNA, and the ATP-dependent hybridization of homologous single-stranded DNAs. It interacts with LexA causing its activation and leading to its autocatalytic cleavage. In Aeromonas hydrophila subsp. hydrophila (strain ATCC 7966 / DSM 30187 / BCRC 13018 / CCUG 14551 / JCM 1027 / KCTC 2358 / NCIMB 9240 / NCTC 8049), this protein is Protein RecA.